The sequence spans 72 residues: Large ribosomal subunit protein bL31 (72 aa).

Residues C16, C18, C38, and C41 each coordinate Zn(2+).

It belongs to the bacterial ribosomal protein bL31 family. Type A subfamily. As to quaternary structure, part of the 50S ribosomal subunit. Zn(2+) is required as a cofactor.

In terms of biological role, binds the 23S rRNA. In Beutenbergia cavernae (strain ATCC BAA-8 / DSM 12333 / CCUG 43141 / JCM 11478 / NBRC 16432 / NCIMB 13614 / HKI 0122), this protein is Large ribosomal subunit protein bL31.